A 1036-amino-acid chain; its full sequence is Multiple C2 domain and transmembrane region protein 2 (1036 aa).

The C2 1 domain occupies 1–110 (MRNTTKLVVH…YKDDQVYQRF (110 aa)). 2 disordered regions span residues 137–204 (DQTF…PVQK) and 225–246 (RENP…HPQN). Residues 146 to 155 (PYTSPTQASA) show a composition bias toward polar residues. Residues 158-168 (TEEDTADSETE) are compositionally biased toward acidic residues. Positions 190–204 (VEGKKSEEVKEPVQK) are enriched in basic and acidic residues. C2 domains are found at residues 277–399 (PNAG…PQWY), 440–563 (VHGE…SRWF), and 607–734 (YISD…THSF). Residues Asp316, Asp364, Glu366, and Asp372 each coordinate Ca(2+). Transmembrane regions (helical) follow at residues 871 to 891 (FILV…MFFI) and 979 to 999 (LFIL…FKAI).

Belongs to the MCTP family. Requires Ca(2+) as cofactor. As to expression, expressed in the vascular tissues of roots and rosette leaves. Accumulates in roots meristems. Observed in flowers.

It localises to the cell membrane. In terms of biological role, may function as a signaling molecule by regulating the trafficking of other regulators. The chain is Multiple C2 domain and transmembrane region protein 2 from Arabidopsis thaliana (Mouse-ear cress).